The primary structure comprises 331 residues: MKKRLAVLLVIVLTITFSFSVTTRIKDIAFFRGARDNQLFGIGLVVGLNGTGDSGNVNSPLLLEMMKKFGVQVSENDLKSKNTALVMVLADIPPFAKEGMRIDCVVASIADAKSLAGGYLLQTPLYGADGKVYAVAQGSVIIGGEDVKLSSNLQKRYRVVGYLPEGAIVERDIPSDMLDGDSVTILLRQPDITTAARVARAINEKFEMDLAKAIDPSAIKLTVPNAFQDDLITFLSLVEEIEVQPDVPARIVVNERTGTVLFGGDVKLSDFVISYGNFTISVTGGKIGDKDATISNLVSALKAAGATPQDIIAILQVIYESGYITGELIIM.

A signal peptide spans 1–25 (MKKRLAVLLVIVLTITFSFSVTTRI).

This sequence belongs to the FlgI family. The basal body constitutes a major portion of the flagellar organelle and consists of four rings (L,P,S, and M) mounted on a central rod.

The protein resides in the periplasm. It is found in the bacterial flagellum basal body. Assembles around the rod to form the L-ring and probably protects the motor/basal body from shearing forces during rotation. The protein is Flagellar P-ring protein of Thermotoga petrophila (strain ATCC BAA-488 / DSM 13995 / JCM 10881 / RKU-1).